Reading from the N-terminus, the 447-residue chain is Glutamyl-tRNA(Gln) amidotransferase subunit A (447 aa).

Catalysis depends on charge relay system residues Lys-51 and Ser-126. Ser-150 (acyl-ester intermediate) is an active-site residue.

Belongs to the amidase family. GatA subfamily. In terms of assembly, heterotrimer of A, B and C subunits.

It catalyses the reaction L-glutamyl-tRNA(Gln) + L-glutamine + ATP + H2O = L-glutaminyl-tRNA(Gln) + L-glutamate + ADP + phosphate + H(+). Allows the formation of correctly charged Gln-tRNA(Gln) through the transamidation of misacylated Glu-tRNA(Gln) in organisms which lack glutaminyl-tRNA synthetase. The reaction takes place in the presence of glutamine and ATP through an activated gamma-phospho-Glu-tRNA(Gln). In Helicobacter hepaticus (strain ATCC 51449 / 3B1), this protein is Glutamyl-tRNA(Gln) amidotransferase subunit A.